The primary structure comprises 150 residues: Small ribosomal subunit protein uS11y (150 aa).

Residues 129–150 (EDVTPVPTDSTRRKGGRRGRRL) form a disordered region. Basic residues predominate over residues 141–150 (RKGGRRGRRL).

It belongs to the universal ribosomal protein uS11 family.

This is Small ribosomal subunit protein uS11y from Zea mays (Maize).